Reading from the N-terminus, the 232-residue chain is 7-cyano-7-deazaguanine synthase (232 aa).

ATP is bound at residue 7 to 17 (CSGGLDSVSLA). Zn(2+) contacts are provided by Cys185, Cys193, Cys196, and Cys199.

Belongs to the QueC family. Zn(2+) is required as a cofactor.

It catalyses the reaction 7-carboxy-7-deazaguanine + NH4(+) + ATP = 7-cyano-7-deazaguanine + ADP + phosphate + H2O + H(+). Its pathway is purine metabolism; 7-cyano-7-deazaguanine biosynthesis. Its function is as follows. Catalyzes the ATP-dependent conversion of 7-carboxy-7-deazaguanine (CDG) to 7-cyano-7-deazaguanine (preQ(0)). This Chelativorans sp. (strain BNC1) protein is 7-cyano-7-deazaguanine synthase.